The sequence spans 60 residues: Cytotoxin 1 (60 aa).

4 disulfide bridges follow: Cys-3–Cys-21, Cys-14–Cys-38, Cys-42–Cys-53, and Cys-54–Cys-59.

It belongs to the three-finger toxin family. Short-chain subfamily. Type IA cytotoxin sub-subfamily. As to quaternary structure, monomer in solution; Homodimer and oligomer in the presence of negatively charged lipids forming a pore with a size ranging between 20 and 30 Angstroms. In terms of tissue distribution, expressed by the venom gland.

Its subcellular location is the secreted. It localises to the target cell membrane. Its function is as follows. Shows cytolytic activity on many different cells by forming pore in lipid membranes. In vivo, increases heart rate or kills the animal by cardiac arrest. In addition, it binds to heparin with high affinity, interacts with Kv channel-interacting protein 1 (KCNIP1) in a calcium-independent manner, and binds to integrin alpha-V/beta-3 (ITGAV/ITGB3) with moderate affinity. The polypeptide is Cytotoxin 1 (Naja mossambica (Mozambique spitting cobra)).